A 317-amino-acid chain; its full sequence is Serpentine receptor class delta-46 (317 aa).

7 helical membrane passes run 9–29, 42–62, 91–111, 129–149, 185–205, 239–259, and 269–289; these read FYII…YVII, IFLC…LLQA, YVLC…TMYV, VIIL…YLTI, QIVF…MFCL, AFLP…ALIT, and FVSV…FYTV.

This sequence belongs to the nematode receptor-like protein srd family.

It localises to the membrane. The sequence is that of Serpentine receptor class delta-46 (srd-46) from Caenorhabditis elegans.